A 156-amino-acid polypeptide reads, in one-letter code: Small ribosomal subunit protein uS7 (156 aa).

Belongs to the universal ribosomal protein uS7 family. In terms of assembly, part of the 30S ribosomal subunit. Contacts proteins S9 and S11.

Its function is as follows. One of the primary rRNA binding proteins, it binds directly to 16S rRNA where it nucleates assembly of the head domain of the 30S subunit. Is located at the subunit interface close to the decoding center, probably blocks exit of the E-site tRNA. This is Small ribosomal subunit protein uS7 from Mesorhizobium japonicum (strain LMG 29417 / CECT 9101 / MAFF 303099) (Mesorhizobium loti (strain MAFF 303099)).